Reading from the N-terminus, the 143-residue chain is Large ribosomal subunit protein uL11 (143 aa).

Belongs to the universal ribosomal protein uL11 family. Part of the ribosomal stalk of the 50S ribosomal subunit. Interacts with L10 and the large rRNA to form the base of the stalk. L10 forms an elongated spine to which L12 dimers bind in a sequential fashion forming a multimeric L10(L12)X complex. Post-translationally, one or more lysine residues are methylated.

Functionally, forms part of the ribosomal stalk which helps the ribosome interact with GTP-bound translation factors. The chain is Large ribosomal subunit protein uL11 from Borreliella burgdorferi (strain ATCC 35210 / DSM 4680 / CIP 102532 / B31) (Borrelia burgdorferi).